The sequence spans 213 residues: Thymidylate kinase (213 aa).

9-16 (GVEGCGKT) provides a ligand contact to ATP.

Belongs to the thymidylate kinase family.

The catalysed reaction is dTMP + ATP = dTDP + ADP. Functionally, phosphorylation of dTMP to form dTDP in both de novo and salvage pathways of dTTP synthesis. This Geotalea uraniireducens (strain Rf4) (Geobacter uraniireducens) protein is Thymidylate kinase.